The following is an 842-amino-acid chain: Putative G-type lectin S-receptor-like serine/threonine-protein kinase At1g61610 (842 aa).

The first 22 residues, 1-22, serve as a signal peptide directing secretion; it reads MAGFNRNLTLVTTLLIFHQLCS. Residues asparagine 7, asparagine 23, asparagine 35, asparagine 60, asparagine 110, asparagine 123, asparagine 304, asparagine 351, and asparagine 380 are each glycosylated (N-linked (GlcNAc...) asparagine). Topologically, residues 23-443 are extracellular; sequence NVSCSTSNSF…KLGGGKENST (421 aa). Positions 29-150 constitute a Bulb-type lectin domain; that stretch reads SNSFTRNHTI…SDRRKWYWES (122 aa). An EGF-like domain is found at 292 to 331; sequence PSTECEKYNRCGNYSVCDDSKEFDSGKCSCIDGFEPVHQD. 2 disulfide bridges follow: cysteine 296-cysteine 308 and cysteine 302-cysteine 319. One can recognise a PAN domain in the interval 350-431; the sequence is CNQSLVAGQE…GGNSINIRLA (82 aa). 2 disulfides stabilise this stretch: cysteine 385–cysteine 406 and cysteine 389–cysteine 395. Asparagine 441 carries N-linked (GlcNAc...) asparagine glycosylation. Residues 444 to 464 traverse the membrane as a helical segment; it reads LWIIVFSVIGAFLLGLCIWIL. Residues 465–842 lie on the Cytoplasmic side of the membrane; that stretch reads WKFKKSLKAF…DVTFTTIVGR (378 aa). The 290-residue stretch at 525 to 814 folds into the Protein kinase domain; the sequence is FAEENKLGQG…PRQPTFHSFL (290 aa). Residues 531–539 and lysine 553 each bind ATP; that span reads LGQGGFGTV. At serine 559 the chain carries Phosphoserine. The tract at residues 614–631 is caM-binding; it reads SKQGSLDWRKRWEVIGGI. Residue aspartate 650 is the Proton acceptor of the active site. 2 positions are modified to phosphoserine: serine 654 and serine 667. Threonine 684 is modified (phosphothreonine). A phosphoserine mark is found at serine 728 and serine 830. Phosphothreonine is present on threonine 837.

The protein belongs to the protein kinase superfamily. Ser/Thr protein kinase family.

It is found in the cell membrane. The catalysed reaction is L-seryl-[protein] + ATP = O-phospho-L-seryl-[protein] + ADP + H(+). It catalyses the reaction L-threonyl-[protein] + ATP = O-phospho-L-threonyl-[protein] + ADP + H(+). The chain is Putative G-type lectin S-receptor-like serine/threonine-protein kinase At1g61610 from Arabidopsis thaliana (Mouse-ear cress).